We begin with the raw amino-acid sequence, 301 residues long: Securin (301 aa).

3 disordered regions span residues 1–55 (MLPR…RTVL), 82–120 (DSPT…DTPL), and 218–284 (ASDQ…RSIH). The D-box 1 motif lies at 33–36 (RAPL). Positions 38–50 (STKQSNAPSSVTV) are enriched in polar residues. The D-box 2 motif lies at 52 to 55 (RTVL). 3 stretches are compositionally biased toward polar residues: residues 88-98 (EPNSQGISRSA), 110-119 (PRRSSLTDTP), and 231-245 (VSKQ…STVY). Repeats lie at residues 250 to 260 (ASGKSIPRPLS) and 270 to 280 (ASGNSRRRPLS).

The protein belongs to the securin family. Interacts with the caspase-like cut1, and prevents its protease activity probably by covering its active site. Ubiquitinated by the anaphase promoting complex (APC) at the onset of anaphase, conducting to its degradation.

The protein resides in the cytoplasm. It is found in the nucleus. In terms of biological role, regulatory protein, which plays a central role in chromosome stability. Probably acts by blocking the action of key proteins. During the mitosis, it blocks separase/cut1 function, preventing the proteolysis of the cohesin complex and the subsequent segregation of the chromosomes. At the onset of anaphase, it is ubiquitinated, conducting to its destruction and to the liberation of cut1. This chain is Securin (cut2), found in Schizosaccharomyces pombe (strain 972 / ATCC 24843) (Fission yeast).